The chain runs to 47 residues: uncharacterized protein (47 aa).

Residues 28–45 (VMIWGCLPYFLYVLIRMF) traverse the membrane as a helical segment.

The protein resides in the cell membrane. This is an uncharacterized protein from Bacillus subtilis (strain 168).